The primary structure comprises 166 residues: Myeloid-derived growth factor (166 aa).

The first 24 residues, 1-24 (MAAPSGGFWTAVVLAAAALKLAAA), serve as a signal peptide directing secretion.

The protein belongs to the MYDGF family. Expressed in prostate, spleen and lung, and weakly expressed in the left ventricle (LF) and liver. Expressed predominantly in inflammatory cells, such as monocytes and macrophages, and weakly expressed in neutrophils, T-cells, B-cells, endothelial cells and cardiac myocytes, after myocardial infarction (MI) (at protein level).

It localises to the secreted. The protein resides in the endoplasmic reticulum-Golgi intermediate compartment. It is found in the endoplasmic reticulum. Its subcellular location is the golgi apparatus. Bone marrow-derived monocyte and paracrine-acting protein that promotes cardiac myocyte survival and adaptive angiogenesis for cardiac protection and/or repair after myocardial infarction (MI). Stimulates endothelial cell proliferation through a MAPK1/3-, STAT3- and CCND1-mediated signaling pathway. Inhibits cardiac myocyte apoptosis in a PI3K/AKT-dependent signaling pathway. The polypeptide is Myeloid-derived growth factor (Mus musculus (Mouse)).